The following is a 119-amino-acid chain: Large ribosomal subunit protein bL20 (119 aa).

Belongs to the bacterial ribosomal protein bL20 family.

Its function is as follows. Binds directly to 23S ribosomal RNA and is necessary for the in vitro assembly process of the 50S ribosomal subunit. It is not involved in the protein synthesizing functions of that subunit. The protein is Large ribosomal subunit protein bL20 of Streptococcus uberis (strain ATCC BAA-854 / 0140J).